Here is a 402-residue protein sequence, read N- to C-terminus: Nodulation protein E (402 aa).

In terms of domain architecture, Ketosynthase family 3 (KS3) spans 2–401 (DRRVVITGMG…GTNAVLAFKQ (400 aa)). Active-site for beta-ketoacyl synthase activity residues include cysteine 162, histidine 294, and histidine 331. Residues 329–348 (HAHCIGAASALEMIACVMAI) form a helical membrane-spanning segment.

The protein belongs to the thiolase-like superfamily. Beta-ketoacyl-ACP synthases family.

It localises to the cell inner membrane. In terms of biological role, proposed to synthesize NOD factor fatty acyl chain. Involved in the synthesis of a highly unsaturated fatty acid moiety, which forms part of a lipo-oligosaccharide that is responsible for host specificity. This Rhizobium meliloti (strain 1021) (Ensifer meliloti) protein is Nodulation protein E (nodE).